Here is a 441-residue protein sequence, read N- to C-terminus: Deoxyguanosinetriphosphate triphosphohydrolase-like protein (441 aa).

The interval 1–27 is disordered; the sequence is MTSSVWQERRHGEDKQRRNDHRSPYQR. A compositionally biased stretch (basic and acidic residues) spans 7 to 27; sequence QERRHGEDKQRRNDHRSPYQR. Residues 59–252 form the HD domain; sequence RLTHSLEVSQ…MELADDIAYA (194 aa).

It belongs to the dGTPase family. Type 2 subfamily.

The sequence is that of Deoxyguanosinetriphosphate triphosphohydrolase-like protein from Shewanella oneidensis (strain ATCC 700550 / JCM 31522 / CIP 106686 / LMG 19005 / NCIMB 14063 / MR-1).